Here is a 105-residue protein sequence, read N- to C-terminus: Large ribosomal subunit protein uL18c (105 aa).

The protein belongs to the universal ribosomal protein uL18 family. In terms of assembly, part of the 50S ribosomal subunit; contacts the 5S rRNA.

It is found in the plastid. Its subcellular location is the chloroplast. In terms of biological role, binds 5S rRNA, forms part of the central protuberance of the 50S subunit. The polypeptide is Large ribosomal subunit protein uL18c (rpl18) (Gracilaria tenuistipitata var. liui (Red alga)).